The following is a 295-amino-acid chain: Probable isochorismatase (295 aa).

Residues 1 to 21 (MGIPKIAGYPLPTPAEFPDNR) are disordered. Residues 207-286 (EIRSQKPLTL…EWWLVIEQAR (80 aa)) form the Carrier domain. Serine 247 carries the post-translational modification O-(pantetheine 4'-phosphoryl)serine.

This sequence belongs to the isochorismatase family. Requires pantetheine 4'-phosphate as cofactor.

The enzyme catalyses isochorismate + H2O = (2S,3S)-2,3-dihydroxy-2,3-dihydrobenzoate + pyruvate. It functions in the pathway siderophore biosynthesis; vulnibactin biosynthesis. Involved in the biosynthesis of the catechol siderophore vulnibactin. Vulnibactin is a chelating compound involved in transporting iron from the bacterial environment into the cell cytoplasm. In Vibrio vulnificus (strain CMCP6), this protein is Probable isochorismatase (venB).